Reading from the N-terminus, the 463-residue chain is Putative protein FAM90A2P (463 aa).

Disordered regions lie at residues 1–42 (MTAR…DPRL), 67–115 (ALVP…PQRK), 150–295 (MPVH…PAQA), and 326–365 (ALEN…PPHS). 3 stretches are compositionally biased toward basic and acidic residues: residues 74-83 (GKKEGKENLK), 97-114 (NKDK…DPQR), and 159-170 (PCVDPELADRSA). Residues 180 to 198 (LASLSPLRKASLRSSSSLG) show a composition bias toward low complexity.

Belongs to the FAM90 family.

The sequence is that of Putative protein FAM90A2P (FAM90A2P) from Homo sapiens (Human).